A 122-amino-acid chain; its full sequence is Large ribosomal subunit protein uL14 (122 aa).

It belongs to the universal ribosomal protein uL14 family. Part of the 50S ribosomal subunit. Forms a cluster with proteins L3 and L19. In the 70S ribosome, L14 and L19 interact and together make contacts with the 16S rRNA in bridges B5 and B8.

Binds to 23S rRNA. Forms part of two intersubunit bridges in the 70S ribosome. The sequence is that of Large ribosomal subunit protein uL14 from Thermobifida fusca (strain YX).